The primary structure comprises 44 residues: Small, acid-soluble spore protein P (44 aa).

Positions 1-44 (MSQTMSKNNREAKEKKGQPEPLSGSHKVKNRNHSRQKHHAHHDM) are disordered. Positions 8-18 (NNREAKEKKGQ) are enriched in basic and acidic residues. A compositionally biased stretch (basic residues) spans 26–44 (HKVKNRNHSRQKHHAHHDM).

This sequence belongs to the SspP family.

The protein resides in the spore core. The polypeptide is Small, acid-soluble spore protein P (Bacillus cereus (strain ATCC 10987 / NRS 248)).